The sequence spans 852 residues: Probable nitrite reductase-hydroxylamine oxidoreductase fusion protein (852 aa).

Residues 1–27 form the signal peptide; that stretch reads MLNKSAALVPVVLAFLFLFLCFQCLYA. The interval 28–327 is nitrite reductase domain; sequence DIRCLTGKDG…DEGRKTLSAP (300 aa). Plastocyanin-like domains are found at residues 72-169 and 217-307; these read VPGP…IVEP and GETW…VEEG. Cu cation-binding residues include H102 and H145. A hydroxylamine oxidoreductase domain region spans residues 328-827; it reads GQDRQPPTLE…ISWWWGTAQG (500 aa). C406, C409, H410, H426, C463, C466, H467, H471, C483, C486, H487, H505, H537, C543, C546, H547, H550, C563, C566, H567, C614, C617, H618, C686, C689, H690, and H813 together coordinate heme.

The protein in the N-terminal section; belongs to the multicopper oxidase family. The cofactor is Cu cation. Heme serves as cofactor.

The protein localises to the encapsulin nanocompartment. It carries out the reaction hydroxylamine + 4 Fe(III)-[cytochrome c] + H2O = 4 Fe(II)-[cytochrome c] + nitrite + 5 H(+). The catalysed reaction is nitric oxide + Fe(III)-[cytochrome c] + H2O = Fe(II)-[cytochrome c] + nitrite + 2 H(+). In terms of biological role, a nitrite reductase-hydroxylamine oxidoreductase protein that probably functions in the type 1 encapsulin nanocompartment. Probably involved in reductive catalysis. Targeted to the encapsulin nanocompartment by association with the diheme domain of the encapsulin shell protein (AC Q1Q6L7). Catalyzes the reduction of nitrite to nitric oxide (NO). Catalyzes the oxidation of hydroxylamine to nitrite. In Kuenenia stuttgartiensis, this protein is Probable nitrite reductase-hydroxylamine oxidoreductase fusion protein.